The primary structure comprises 137 residues: Flagellar basal body rod protein FlgB (137 aa).

It belongs to the flagella basal body rod proteins family. The basal body constitutes a major portion of the flagellar organelle and consists of a number of rings mounted on a central rod. In Gram-negative bacteria, at least four rings, L, P, S and M are present, whereas Gram-positive bacteria lack the L and P rings. The rod consists of about 26 subunits of FlgG in the distal portion, and FlgB, FlgC and FlgF build up the proximal portion of the rod with about 6 subunits each. Rod assembly occurs by export via the flagellum-specific pathway of its constituent proteins and by their incorporation into the rod structure in the probable order of FlgB, FlgC, FlgF and FlgG. Another protein, FliE, also assembles onto the stable rod structure.

Its subcellular location is the bacterial flagellum basal body. Structural component of flagellum, the bacterial motility apparatus. Part of the rod structure of flagellar basal body. The protein is Flagellar basal body rod protein FlgB of Proteus mirabilis (strain HI4320).